We begin with the raw amino-acid sequence, 256 residues long: Isoprenyl transferase 1 (256 aa).

Aspartate 34 is a catalytic residue. Position 34 (aspartate 34) interacts with Mg(2+). Substrate contacts are provided by residues glycine 35–arginine 38, tryptophan 39, histidine 52, and serine 80–glutamate 82. The active-site Proton acceptor is asparagine 83. Substrate-binding positions include arginine 86, arginine 205, and arginine 211–serine 213. Glutamate 224 contacts Mg(2+).

It belongs to the UPP synthase family. Homodimer. Mg(2+) is required as a cofactor.

Functionally, catalyzes the condensation of isopentenyl diphosphate (IPP) with allylic pyrophosphates generating different type of terpenoids. The polypeptide is Isoprenyl transferase 1 (Corynebacterium efficiens (strain DSM 44549 / YS-314 / AJ 12310 / JCM 11189 / NBRC 100395)).